A 451-amino-acid polypeptide reads, in one-letter code: UDP-N-acetylmuramoylalanine--D-glutamate ligase (451 aa).

120–126 (GSNGKTT) provides a ligand contact to ATP.

It belongs to the MurCDEF family.

It is found in the cytoplasm. The catalysed reaction is UDP-N-acetyl-alpha-D-muramoyl-L-alanine + D-glutamate + ATP = UDP-N-acetyl-alpha-D-muramoyl-L-alanyl-D-glutamate + ADP + phosphate + H(+). Its pathway is cell wall biogenesis; peptidoglycan biosynthesis. Its function is as follows. Cell wall formation. Catalyzes the addition of glutamate to the nucleotide precursor UDP-N-acetylmuramoyl-L-alanine (UMA). This chain is UDP-N-acetylmuramoylalanine--D-glutamate ligase, found in Bacillus velezensis (strain DSM 23117 / BGSC 10A6 / LMG 26770 / FZB42) (Bacillus amyloliquefaciens subsp. plantarum).